The chain runs to 444 residues: MRPSAAAGGGGGGGGRRKAAAAAAAASREWLVVPASGQARVEEAGKHAVMARTGLPARDLRVLDPLLSYPSTILGRERAIVVNLERVKAVITAAEVLLPNSKDPAFASFVCDLQARVLASSSDQAAEFTDMEGESSAVTSPFPALTSTTPNELEMTNKNSNVVGGMTHSNSMPTLTAAKDGNTKVLPFEFRALEVCLESACRSLEEETSTLEQEAYPALDELTSKISTLNLERVRQIKSRLVAISGRVQKVRDELEHLLDDEMDMAEMYLTEKLTRQEISETSSRVEVDDPSQLEVDRDEDYRSEADVSNGTFIGYKPHIEELEMLLEAYFVQIDGTLNKLSHLREYVDDTEDYINIMLDDKQNQLLQMGVMLSTATVVITAGVAVVGLFGMNIGISLYADPTNEEEKRASNMKFWETTLGTIAGCTVMYIVAMGWGKRSGLLQ.

The interval 128-155 is disordered; the sequence is FTDMEGESSAVTSPFPALTSTTPNELEM. Over residues 145-155 the composition is skewed to polar residues; it reads LTSTTPNELEM. Residues 195-258 adopt a coiled-coil conformation; sequence VCLESACRSL…QKVRDELEHL (64 aa). A helical transmembrane segment spans residues 370 to 390; it reads GVMLSTATVVITAGVAVVGLF. The Required for magnesium transport activity signature appears at 391-393; sequence GMN. Residues 415-435 traverse the membrane as a helical segment; sequence FWETTLGTIAGCTVMYIVAMG.

Belongs to the CorA metal ion transporter (MIT) (TC 1.A.35.5) family.

It is found in the membrane. Functionally, magnesium transporter that may mediate the influx of magnesium. The polypeptide is Magnesium transporter MRS2-F (MRS2-F) (Oryza sativa subsp. indica (Rice)).